We begin with the raw amino-acid sequence, 315 residues long: Methionyl-tRNA formyltransferase (315 aa).

112 to 115 lines the (6S)-5,6,7,8-tetrahydrofolate pocket; sequence SLLP.

It belongs to the Fmt family.

It carries out the reaction L-methionyl-tRNA(fMet) + (6R)-10-formyltetrahydrofolate = N-formyl-L-methionyl-tRNA(fMet) + (6S)-5,6,7,8-tetrahydrofolate + H(+). Its function is as follows. Attaches a formyl group to the free amino group of methionyl-tRNA(fMet). The formyl group appears to play a dual role in the initiator identity of N-formylmethionyl-tRNA by promoting its recognition by IF2 and preventing the misappropriation of this tRNA by the elongation apparatus. The protein is Methionyl-tRNA formyltransferase of Leptospira borgpetersenii serovar Hardjo-bovis (strain JB197).